A 540-amino-acid chain; its full sequence is uncharacterized protein (540 aa).

The signal sequence occupies residues 1–20 (MSVSYRGPRWSSFVHVSQHS).

This sequence belongs to the TP096X family.

This is an uncharacterized protein from Treponema pallidum (strain Nichols).